A 136-amino-acid chain; its full sequence is Protein NrdI (136 aa).

Belongs to the NrdI family.

Functionally, probably involved in ribonucleotide reductase function. This Klebsiella pneumoniae subsp. pneumoniae (strain ATCC 700721 / MGH 78578) protein is Protein NrdI.